A 244-amino-acid polypeptide reads, in one-letter code: Protein DCG1 (244 aa).

Belongs to the HyuE racemase family.

The chain is Protein DCG1 (DCG1) from Saccharomyces cerevisiae (strain ATCC 204508 / S288c) (Baker's yeast).